Here is a 764-residue protein sequence, read N- to C-terminus: MGSNLSPQLCLMPFILGLLSGGVTTTPWSLARPQGSCSLEGVEIKGGSFRLLQEGQALEYVCPSGFYPYPVQTRTCRSTGSWSTLKTQDQKTVRKAECRAIHCPRPHDFENGEYWPRSPYYNVSDEISFHCYDGYTLRGSANRTCQVNGRWSGQTAICDNGAGYCSNPGIPIGTRKVGSQYRLEDSVTYHCSRGLTLRGSQRRTCQEGGSWSGTEPSCQDSFMYDTPQEVAEAFLSSLTETIEGVDAEDGHGPGEQQKRKIVLDPSGSMNIYLVLDGSDSIGASNFTGAKKCLVNLIEKVASYGVKPRYGLVTYATYPKIWVKVSEADSSNADWVTKQLNEINYEDHKLKSGTNTKKALQAVYSMMSWPDDVPPEGWNRTRHVIILMTDGLHNMGGDPITVIDEIRDLLYIGKDRKNPREDYLDVYVFGVGPLVNQVNINALASKKDNEQHVFKVKDMENLEDVFYQMIDESQSLSLCGMVWEHRKGTDYHKQPWQAKISVIRPSKGHESCMGAVVSEYFVLTAAHCFTVDDKEHSIKVSVGGEKRDLEIEVVLFHPNYNINGKKEAGIPEFYDYDVALIKLKNKLKYGQTIRPICLPCTEGTTRALRLPPTTTCQQQKEELLPAQDIKALFVSEEEKKLTRKEVYIKNGDKKGSCERDAQYAPGYDKVKDISEVVTPRFLCTGGVSPYADPNTCRGDSGGPLIVHKRSRFIQVGVISWGVVDVCKNQKRQKQVPAHARDFHINLFQVLPWLKEKLQDEDLGFL.

A signal peptide spans 1–25; sequence MGSNLSPQLCLMPFILGLLSGGVTT. Sushi domains lie at 35–100, 101–160, and 163–220; these read GSCS…ECRA, IHCP…ICDN, and GYCS…SCQD. Disulfide bonds link Cys-37–Cys-76, Cys-62–Cys-98, Cys-103–Cys-145, Cys-131–Cys-158, Cys-165–Cys-205, and Cys-191–Cys-218. Asn-122 and Asn-142 each carry an N-linked (GlcNAc...) asparagine glycan. One can recognise a VWFA domain in the interval 270–469; the sequence is NIYLVLDGSD…NLEDVFYQMI (200 aa). Residues Ser-278 and Ser-280 each coordinate Mg(2+). 2 residues coordinate Mn(2+): Ser-278 and Ser-280. N-linked (GlcNAc...) asparagine glycosylation occurs at Asn-285. Residue Lys-291 is glycosylated (N-linked (Glc) (glycation) lysine). Residue Thr-353 coordinates Mg(2+). A Mn(2+)-binding site is contributed by Thr-353. Residue Asn-378 is glycosylated (N-linked (GlcNAc...) asparagine). Positions 477 to 757 constitute a Peptidase S1 domain; it reads LCGMVWEHRK…VLPWLKEKLQ (281 aa). 5 disulfides stabilise this stretch: Cys-478–Cys-596, Cys-511–Cys-527, Cys-599–Cys-615, Cys-656–Cys-682, and Cys-695–Cys-725. Residues His-526 and Asp-576 each act as charge relay system in the active site. Ser-699 (charge relay system) is an active-site residue.

It belongs to the peptidase S1 family. In terms of assembly, monomer. Interacts with complement C3b; this interaction is dependent on the presence of Mg(2+). Catalytic component of the C3 convertase of the alternative complement pathway, also named C3bBb, composed of complement factor B Bb and complement C3b. Catalytic component of the C5 convertase of the alternative complement pathway, also named C3bBb3b, composed of complement factor B Bb and additional molecules of complement C3b. Interacts to CFP; this interaction contributes to the stabilization of the active C3-convertase enzyme complex. Mg(2+) serves as cofactor. Requires Mn(2+) as cofactor. Cleaved by CFD following activation of the alternative complement system, generating Ba and Bb chains. Cleavage and activation takes place when CFB is already associated with complement C3b.

Its subcellular location is the secreted. The protein resides in the cell surface. The catalysed reaction is Cleavage of Arg-|-Ser bond in complement component C3 alpha-chain to yield C3a and C3b, and Arg-|-Xaa bond in complement component C5 alpha-chain to yield C5a and C5b.. In terms of biological role, precursor of the catalytic component of the C3 and C5 convertase complexes of the alternative pathway of the complement system, a cascade of proteins that leads to phagocytosis and breakdown of pathogens and signaling that strengthens the adaptive immune system. The alternative complement pathway acts as an amplification loop that enhances other complement pathways (classical, lectin and GZMK) by promoting formation of additional C3 and C5 convertases. CFB is cleaved and activated by CFD to generate Ba and Bb chains; Bb chain constituting the catalytic component of the C3 and C5 convertases. Functionally, serine protease component of the complement C3 and C5 convertase complexes of the alternative complement pathway. Following cleavage and activation by factor D (CFD), forms the C3 convertase together with complement C3b. As part of the C3 convertase, cleaves and activates C3 into C3a anaphylatoxin and C3b opsonin, the next components of the complement pathways. When an additional complement C3b molecule binds to the C3 convertase, forms the C5 convertase, which cleaves and activates C5 into C5a anaphylatoxin and C5b component of the membrane attack complex. Its function is as follows. Involved in proliferation and differentiation of preactivated B-lymphocytes, rapid spreading of peripheral blood monocytes, stimulation of lymphocyte blastogenesis and lysis of erythrocytes. The sequence is that of Complement factor B from Homo sapiens (Human).